Reading from the N-terminus, the 479-residue chain is Probable xyloglucan galactosyltransferase GT15 (479 aa).

Residues 1–20 are Cytoplasmic-facing; sequence MKNNNSSSVSIENHPWKKKP. A helical; Signal-anchor for type II membrane protein membrane pass occupies residues 21-40; the sequence is TTLLLFLSLLSISLLLLRLS. The Lumenal portion of the chain corresponds to 41–479; it reads QDKIILITTT…GIRRNEFKTD (439 aa). Residues N155, N242, N285, and N391 are each glycosylated (N-linked (GlcNAc...) asparagine).

This sequence belongs to the glycosyltransferase 47 family. In terms of tissue distribution, expressed in roots, hypocotyls, cotyledons, leaves, stems and sepals.

It localises to the golgi apparatus membrane. In terms of biological role, functions in xyloglucan synthesis by adding side chains to the xylosylated glucan backbone. Involved in the galactosylation of hemicellulose xyloglucan. This Arabidopsis thaliana (Mouse-ear cress) protein is Probable xyloglucan galactosyltransferase GT15.